Reading from the N-terminus, the 107-residue chain is MSEPDTSSGFSGSVENGTFLELFPTSLSTSVDPSSGHLSNVYIYVSIFLSLLAFLLLLLIIALQRLKNIISSSSSYPEYPSDAGSSFTNLEVCSISSQRSTFSNLSS.

The chain crosses the membrane as a helical span at residues 43-63 (IYVSIFLSLLAFLLLLLIIAL).

Its subcellular location is the membrane. This is Serine-rich and transmembrane domain-containing protein 1 (SERTM1) from Homo sapiens (Human).